Here is a 292-residue protein sequence, read N- to C-terminus: Probable endonuclease 4 (292 aa).

Zn(2+) is bound by residues histidine 71, histidine 111, glutamate 148, aspartate 182, histidine 185, histidine 217, aspartate 230, histidine 232, and glutamate 262.

This sequence belongs to the AP endonuclease 2 family. The cofactor is Zn(2+).

It catalyses the reaction Endonucleolytic cleavage to 5'-phosphooligonucleotide end-products.. Endonuclease IV plays a role in DNA repair. It cleaves phosphodiester bonds at apurinic or apyrimidinic (AP) sites, generating a 3'-hydroxyl group and a 5'-terminal sugar phosphate. This Aster yellows witches'-broom phytoplasma (strain AYWB) protein is Probable endonuclease 4.